The sequence spans 306 residues: D-alanine--D-alanine ligase B (306 aa).

In terms of domain architecture, ATP-grasp spans 101–303; sequence KLLWQGAGLP…FSQLVVRILE (203 aa). 134–189 is an ATP binding site; the sequence is ISALGLPVIVKPSREGSSVGMSKVVAENALQDALRLAFQHDEEVLIEKWLSGPEFT. Positions 257, 270, and 272 each coordinate Mg(2+).

It belongs to the D-alanine--D-alanine ligase family. It depends on Mg(2+) as a cofactor. The cofactor is Mn(2+).

The protein resides in the cytoplasm. The catalysed reaction is 2 D-alanine + ATP = D-alanyl-D-alanine + ADP + phosphate + H(+). The protein operates within cell wall biogenesis; peptidoglycan biosynthesis. Cell wall formation. In Shigella flexneri, this protein is D-alanine--D-alanine ligase B.